The primary structure comprises 1216 residues: ATP-dependent helicase/nuclease subunit A (1216 aa).

The 463-residue stretch at 26 to 488 (QKKTAEQIEA…ILLKENFRSS (463 aa)) folds into the UvrD-like helicase ATP-binding domain. 47–54 (ASAGSGKT) lines the ATP pocket. The UvrD-like helicase C-terminal domain occupies 515–802 (KHQLVFANTK…ELMTIHKSKG (288 aa)).

This sequence belongs to the helicase family. AddA subfamily. Heterodimer of AddA and AddB/RexB. Mg(2+) is required as a cofactor.

It catalyses the reaction Couples ATP hydrolysis with the unwinding of duplex DNA by translocating in the 3'-5' direction.. The enzyme catalyses ATP + H2O = ADP + phosphate + H(+). The heterodimer acts as both an ATP-dependent DNA helicase and an ATP-dependent, dual-direction single-stranded exonuclease. Recognizes the chi site generating a DNA molecule suitable for the initiation of homologous recombination. The AddA nuclease domain is required for chi fragment generation; this subunit has the helicase and 3' -&gt; 5' nuclease activities. This chain is ATP-dependent helicase/nuclease subunit A, found in Streptococcus pneumoniae (strain CGSP14).